Reading from the N-terminus, the 619-residue chain is Mitogen-activated protein kinase kinase kinase 2 (619 aa).

Disordered regions lie at residues Leu-25 to Val-44, Gln-126 to Gly-168, Leu-201 to Gln-245, and Arg-289 to Asn-355. Ser-26 carries the post-translational modification Phosphoserine. Residues Asp-43 to Asn-122 form the PB1 domain. Polar residues predominate over residues Gln-126 to Pro-143. 2 positions are modified to phosphoserine: Ser-153 and Ser-164. Positions Pro-203 to Ser-219 are enriched in low complexity. Phosphoserine is present on residues Ser-239, Ser-297, Ser-311, Ser-331, Ser-344, and Ser-349. Over residues Thr-290–Val-299 the composition is skewed to polar residues. Residues Ser-300–Ser-315 are compositionally biased toward low complexity. The span at Asp-322–Asp-332 shows a compositional bias: basic and acidic residues. Over residues Pro-336–Pro-346 the composition is skewed to polar residues. The 261-residue stretch at Trp-356 to Val-616 folds into the Protein kinase domain. ATP is bound by residues Leu-362 to Val-370 and Lys-385. The active-site Proton acceptor is the Asp-483.

This sequence belongs to the protein kinase superfamily. STE Ser/Thr protein kinase family. MAP kinase kinase kinase subfamily. As to quaternary structure, self-associates. Binds both upstream activators and downstream substrates in multimolecular complexes. Interacts (via the kinase catalytic domain) with STK38. Interacts with XIAP/BIRC4. Mg(2+) serves as cofactor. Post-translationally, ubiquitination by XIAP/BIRC4 does not lead to proteasomal degradation. In terms of processing, autophosphorylated.

The protein localises to the cytoplasm. The protein resides in the nucleus. The catalysed reaction is L-seryl-[protein] + ATP = O-phospho-L-seryl-[protein] + ADP + H(+). The enzyme catalyses L-threonyl-[protein] + ATP = O-phospho-L-threonyl-[protein] + ADP + H(+). Activated by phosphorylation on Thr-524. Interacts with PKN2; the interaction activates PKN2 kinase activity in a MAP3K2-independent kinase activity. Functionally, component of a protein kinase signal transduction cascade. Regulates the JNK and ERK5 pathways by phosphorylating and activating MAP2K5 and MAP2K7. Plays a role in caveolae kiss-and-run dynamics. This Mus musculus (Mouse) protein is Mitogen-activated protein kinase kinase kinase 2 (Map3k2).